The primary structure comprises 901 residues: Core protein VP3 (901 aa).

This sequence belongs to the orbivirus VP3 family.

It is found in the virion. The VP3 protein is one of the five proteins (with VP1, VP4, VP6 and VP7) which form the inner capsid of the virus. The sequence is that of Core protein VP3 (Segment-3) from Bluetongue virus 10 (isolate USA) (BTV 10).